A 516-amino-acid chain; its full sequence is 2-isopropylmalate synthase (516 aa).

The 263-residue stretch at 5 to 267 (VIIFDTTLRD…STNIVHKEIY (263 aa)) folds into the Pyruvate carboxyltransferase domain. Residues aspartate 14, histidine 202, histidine 204, and asparagine 238 each coordinate Mn(2+). The interval 392–516 (YLKFFSVQSI…NKKLKNLKKY (125 aa)) is regulatory domain.

The protein belongs to the alpha-IPM synthase/homocitrate synthase family. LeuA type 1 subfamily. In terms of assembly, homodimer. Requires Mn(2+) as cofactor.

It localises to the cytoplasm. It catalyses the reaction 3-methyl-2-oxobutanoate + acetyl-CoA + H2O = (2S)-2-isopropylmalate + CoA + H(+). Its pathway is amino-acid biosynthesis; L-leucine biosynthesis; L-leucine from 3-methyl-2-oxobutanoate: step 1/4. Catalyzes the condensation of the acetyl group of acetyl-CoA with 3-methyl-2-oxobutanoate (2-ketoisovalerate) to form 3-carboxy-3-hydroxy-4-methylpentanoate (2-isopropylmalate). This Buchnera aphidicola subsp. Diuraphis noxia protein is 2-isopropylmalate synthase.